Here is a 428-residue protein sequence, read N- to C-terminus: 3-phosphoshikimate 1-carboxyvinyltransferase (428 aa).

Residues K20, S21, and R25 each coordinate 3-phosphoshikimate. K20 is a phosphoenolpyruvate binding site. Phosphoenolpyruvate is bound by residues G92 and R120. 3-phosphoshikimate-binding residues include S166, Q168, D314, and K341. Q168 lines the phosphoenolpyruvate pocket. The Proton acceptor role is filled by D314. The phosphoenolpyruvate site is built by R345 and R387.

It belongs to the EPSP synthase family. As to quaternary structure, monomer.

It is found in the cytoplasm. It carries out the reaction 3-phosphoshikimate + phosphoenolpyruvate = 5-O-(1-carboxyvinyl)-3-phosphoshikimate + phosphate. The protein operates within metabolic intermediate biosynthesis; chorismate biosynthesis; chorismate from D-erythrose 4-phosphate and phosphoenolpyruvate: step 6/7. In terms of biological role, catalyzes the transfer of the enolpyruvyl moiety of phosphoenolpyruvate (PEP) to the 5-hydroxyl of shikimate-3-phosphate (S3P) to produce enolpyruvyl shikimate-3-phosphate and inorganic phosphate. The protein is 3-phosphoshikimate 1-carboxyvinyltransferase of Listeria monocytogenes serotype 4b (strain CLIP80459).